A 179-amino-acid chain; its full sequence is Translation initiation factor IF-3 (179 aa).

The protein belongs to the IF-3 family. As to quaternary structure, monomer.

Its subcellular location is the cytoplasm. IF-3 binds to the 30S ribosomal subunit and shifts the equilibrium between 70S ribosomes and their 50S and 30S subunits in favor of the free subunits, thus enhancing the availability of 30S subunits on which protein synthesis initiation begins. The sequence is that of Translation initiation factor IF-3 from Treponema pallidum (strain Nichols).